Consider the following 428-residue polypeptide: Tryptophan synthase beta chain (428 aa).

An N6-(pyridoxal phosphate)lysine modification is found at lysine 92.

It belongs to the TrpB family. Tetramer of two alpha and two beta chains. The cofactor is pyridoxal 5'-phosphate.

The enzyme catalyses (1S,2R)-1-C-(indol-3-yl)glycerol 3-phosphate + L-serine = D-glyceraldehyde 3-phosphate + L-tryptophan + H2O. The protein operates within amino-acid biosynthesis; L-tryptophan biosynthesis; L-tryptophan from chorismate: step 5/5. The beta subunit is responsible for the synthesis of L-tryptophan from indole and L-serine. The protein is Tryptophan synthase beta chain of Leptothrix cholodnii (strain ATCC 51168 / LMG 8142 / SP-6) (Leptothrix discophora (strain SP-6)).